The sequence spans 20 residues: Small ribosomal subunit protein bS20 (20 aa).

Residues 1 to 20 (ANNPGARKAIRKIEARTEVN) form a disordered region. The span at 11-20 (RKIEARTEVN) shows a compositional bias: basic and acidic residues.

Belongs to the bacterial ribosomal protein bS20 family.

Its function is as follows. Binds directly to 16S ribosomal RNA. This is Small ribosomal subunit protein bS20 (rpsT) from Brevundimonas vesicularis (Pseudomonas vesicularis).